The primary structure comprises 393 residues: Formate-dependent phosphoribosylglycinamide formyltransferase (393 aa).

N(1)-(5-phospho-beta-D-ribosyl)glycinamide contacts are provided by residues 22 to 23 and E82; that span reads EL. Residues R114, K155, 160 to 165, 195 to 198, and E203 each bind ATP; these read SSGKGQ and EGLV. Positions 119-308 constitute an ATP-grasp domain; the sequence is LLAAETLQLP…EFALHVRAFL (190 aa). Residues E267 and E279 each contribute to the Mg(2+) site. N(1)-(5-phospho-beta-D-ribosyl)glycinamide-binding positions include D286, K355, and 362–363; that span reads RR.

This sequence belongs to the PurK/PurT family. Homodimer.

It catalyses the reaction N(1)-(5-phospho-beta-D-ribosyl)glycinamide + formate + ATP = N(2)-formyl-N(1)-(5-phospho-beta-D-ribosyl)glycinamide + ADP + phosphate + H(+). The protein operates within purine metabolism; IMP biosynthesis via de novo pathway; N(2)-formyl-N(1)-(5-phospho-D-ribosyl)glycinamide from N(1)-(5-phospho-D-ribosyl)glycinamide (formate route): step 1/1. Its function is as follows. Involved in the de novo purine biosynthesis. Catalyzes the transfer of formate to 5-phospho-ribosyl-glycinamide (GAR), producing 5-phospho-ribosyl-N-formylglycinamide (FGAR). Formate is provided by PurU via hydrolysis of 10-formyl-tetrahydrofolate. In Yersinia enterocolitica serotype O:8 / biotype 1B (strain NCTC 13174 / 8081), this protein is Formate-dependent phosphoribosylglycinamide formyltransferase.